The following is a 161-amino-acid chain: Phosphopantetheine adenylyltransferase (161 aa).

Residue S9 participates in substrate binding. ATP is bound by residues 9-10 (SF) and H17. Substrate-binding residues include K41, L73, and R87. ATP contacts are provided by residues 88–90 (GLR), E98, and 123–129 (YTFISSS).

The protein belongs to the bacterial CoaD family. In terms of assembly, homohexamer. The cofactor is Mg(2+).

The protein localises to the cytoplasm. It catalyses the reaction (R)-4'-phosphopantetheine + ATP + H(+) = 3'-dephospho-CoA + diphosphate. It participates in cofactor biosynthesis; coenzyme A biosynthesis; CoA from (R)-pantothenate: step 4/5. Functionally, reversibly transfers an adenylyl group from ATP to 4'-phosphopantetheine, yielding dephospho-CoA (dPCoA) and pyrophosphate. The chain is Phosphopantetheine adenylyltransferase from Syntrophomonas wolfei subsp. wolfei (strain DSM 2245B / Goettingen).